A 147-amino-acid polypeptide reads, in one-letter code: Small ribosomal subunit protein uS12 (147 aa).

Belongs to the universal ribosomal protein uS12 family. Part of the 30S ribosomal subunit.

In terms of biological role, with S4 and S5 plays an important role in translational accuracy. Located at the interface of the 30S and 50S subunits. The protein is Small ribosomal subunit protein uS12 of Methanococcus maripaludis (strain DSM 14266 / JCM 13030 / NBRC 101832 / S2 / LL).